A 647-amino-acid polypeptide reads, in one-letter code: Denticleless protein homolog (647 aa).

WD repeat units follow at residues 48 to 88 (AAAV…KQSS), 95 to 134 (AHDN…LLGT), 137 to 177 (GHQC…KDGF), 209 to 248 (DSQQ…TAYH), 264 to 303 (TRKL…TTPV), 308 to 349 (GHSN…QAPM), and 353 to 393 (GHSQ…EGEN). Short sequence motifs (DDB1-binding motif) lie at residues 167 to 170 (WDTR) and 238 to 241 (WDLR). Disordered regions lie at residues 410 to 487 (QSPN…SKSP) and 534 to 647 (KRSR…RTQD). Polar residues-rich tracts occupy residues 426–443 (PSKN…SPQP) and 471–486 (KMPS…SSKS). Positions 543-558 (LKKEDSFGLESEKRLG) are enriched in basic and acidic residues. The span at 586-600 (KGSAQPKSPSSGSSQ) shows a compositional bias: low complexity.

Belongs to the WD repeat cdt2 family. In terms of assembly, component of the DCX(DTL) E3 ubiquitin ligase complex, at least composed of cul4 (cul4a or cul4b), ddb1, dtl/cdt2 and rbx1.

It localises to the nucleus. The protein resides in the cytoplasm. It is found in the cytoskeleton. Its subcellular location is the microtubule organizing center. The protein localises to the centrosome. It localises to the chromosome. It participates in protein modification; protein ubiquitination. Functionally, substrate-specific adapter of a DCX (DDB1-CUL4-X-box) E3 ubiquitin-protein ligase complex required for cell cycle control, DNA damage response and translesion DNA synthesis. The DCX(DTL) complex, also named CRL4(CDT2) complex, mediates the polyubiquitination and subsequent degradation of CDT1, CDKN1A/p21(CIP1), KMT5A and SDE2. CDT1 degradation in response to DNA damage is necessary to ensure proper cell cycle regulation of DNA replication. CDKN1A/p21(CIP1) degradation during S phase or following UV irradiation is essential to control replication licensing. KMT5A degradation is also important for a proper regulation of mechanisms such as TGF-beta signaling, cell cycle progression, DNA repair and cell migration. Most substrates require their interaction with PCNA for their polyubiquitination: substrates interact with PCNA via their PIP-box, and those containing the 'K+4' motif in the PIP box, recruit the DCX(DTL) complex, leading to their degradation. In undamaged proliferating cells, the DCX(DTL) complex also promotes the 'Lys-164' monoubiquitination of PCNA, thereby being involved in PCNA-dependent translesion DNA synthesis. May play a role in the regulation of the circadian clock. The chain is Denticleless protein homolog (dtl) from Danio rerio (Zebrafish).